Reading from the N-terminus, the 612-residue chain is Glucoamylase (612 aa).

Positions 1–19 are cleaved as a signal peptide; sequence MVSFSSCLRALALGSSVLA. Residues 20-25 constitute a propeptide that is removed on maturation; it reads VQPVLR. The N-linked (GlcNAc...) asparagine glycan is linked to Asn39. Residue Trp146 participates in substrate binding. Asp202 functions as the Proton acceptor in the catalytic mechanism. Catalysis depends on Glu205, which acts as the Proton donor. Disulfide bonds link Cys236–Cys239, Cys248–Cys475, and Cys288–Cys296. Positions 506–612 constitute a CBM20 domain; that stretch reads CQVPTTVSVT…KSAVQSDVWR (107 aa).

The protein belongs to the glycosyl hydrolase 15 family.

It carries out the reaction Hydrolysis of terminal (1-&gt;4)-linked alpha-D-glucose residues successively from non-reducing ends of the chains with release of beta-D-glucose.. This chain is Glucoamylase (glaA), found in Aspergillus oryzae (strain ATCC 42149 / RIB 40) (Yellow koji mold).